The sequence spans 318 residues: Protease HtpX homolog (318 aa).

A run of 2 helical transmembrane segments spans residues 6–26 (TAMLLAFMTALFMFVGFLIGG) and 28–48 (GGMMIAFLIAAGMNFFSYWNS). A Zn(2+)-binding site is contributed by histidine 130. Residue glutamate 131 is part of the active site. Residue histidine 134 participates in Zn(2+) binding. 2 consecutive transmembrane segments (helical) span residues 145–165 (ITATLAGAISMLGNFAFFFGG) and 173–193 (PLGFVGVLVAMIVAPLAAMLV). Residue glutamate 202 participates in Zn(2+) binding. Positions 284-318 (NVSTGPVRAVNPTRKSRSVPNTGRGGSQPPRGPWS) are disordered.

The protein belongs to the peptidase M48B family. Requires Zn(2+) as cofactor.

Its subcellular location is the cell inner membrane. The sequence is that of Protease HtpX homolog from Rhizobium etli (strain ATCC 51251 / DSM 11541 / JCM 21823 / NBRC 15573 / CFN 42).